The sequence spans 244 residues: 3-oxoacyl-[acyl-carrier-protein] reductase FabG (244 aa).

NADP(+) is bound by residues 12–15 and T37; that span reads GASR. Ca(2+) contacts are provided by G50 and G53. NADP(+)-binding positions include 59–60 and N86; that span reads NV. A substrate-binding site is contributed by S138. N145 is a Ca(2+) binding site. Y151 functions as the Proton acceptor in the catalytic mechanism. Residues 151-155 and I184 contribute to the NADP(+) site; that span reads YAAAK. Residues E233 and T234 each contribute to the Ca(2+) site.

The protein belongs to the short-chain dehydrogenases/reductases (SDR) family. Homotetramer.

The enzyme catalyses a (3R)-hydroxyacyl-[ACP] + NADP(+) = a 3-oxoacyl-[ACP] + NADPH + H(+). Its pathway is lipid metabolism; fatty acid biosynthesis. In terms of biological role, catalyzes the NADPH-dependent reduction of beta-ketoacyl-ACP substrates to beta-hydroxyacyl-ACP products, the first reductive step in the elongation cycle of fatty acid biosynthesis. The chain is 3-oxoacyl-[acyl-carrier-protein] reductase FabG (fabG) from Salmonella typhi.